The chain runs to 325 residues: DDB1- and CUL4-associated factor 7 homolog (325 aa).

4 WD repeats span residues 62-104 (EHPY…RSIK), 115-155 (EFCA…AKTQ), 158-197 (AHDK…HSTI), and 247-287 (FHKS…KPIE).

It belongs to the WD repeat DCAF7 family.

In Dictyostelium discoideum (Social amoeba), this protein is DDB1- and CUL4-associated factor 7 homolog (wdr68).